The chain runs to 303 residues: N-acetyl-D-glucosamine kinase (303 aa).

Residues 4 to 11 and 133 to 140 contribute to the ATP site; these read GFDIGGTK and GVGGGLIF. Residues His157, Cys177, Cys179, and Cys184 each contribute to the Zn(2+) site.

Belongs to the ROK (NagC/XylR) family. NagK subfamily.

The enzyme catalyses N-acetyl-D-glucosamine + ATP = N-acetyl-D-glucosamine 6-phosphate + ADP + H(+). It functions in the pathway cell wall biogenesis; peptidoglycan recycling. Catalyzes the phosphorylation of N-acetyl-D-glucosamine (GlcNAc) derived from cell-wall degradation, yielding GlcNAc-6-P. This chain is N-acetyl-D-glucosamine kinase, found in Shigella sonnei (strain Ss046).